Reading from the N-terminus, the 244-residue chain is Monothiol glutaredoxin-4 (244 aa).

A Thioredoxin domain is found at 3–110; it reads VVEIKSQDQF…FVKSLEILSN (108 aa). The segment at 116–143 is disordered; the sequence is ANNAKGPKSTSDEESSGSSDDEEDETEE. Over residues 127–143 the composition is skewed to acidic residues; the sequence is DEESSGSSDDEEDETEE. The Glutaredoxin domain maps to 146-244; it reads NARLVKLVQA…DPEYFQHALQ (99 aa). Position 163 (Lys-163) interacts with glutathione. Residue Cys-171 coordinates [2Fe-2S] cluster. Glutathione-binding positions include Arg-200, Phe-212, and 225-226; that span reads LD.

Belongs to the glutaredoxin family. Monothiol subfamily. As to quaternary structure, homodimer. Heterodimer with FRA2.

In terms of biological role, monothiol glutaredoxin involved in the biogenesis of iron-sulfur clusters. Binds one iron-sulfur cluster per dimer. The iron-sulfur cluster is bound between subunits, and is complexed by a bound glutathione and a cysteine residue from each subunit. The sequence is that of Monothiol glutaredoxin-4 (GRX4) from Saccharomyces cerevisiae (strain ATCC 204508 / S288c) (Baker's yeast).